Consider the following 508-residue polypeptide: Probable monogalactosyldiacylglycerol synthase 3, chloroplastic (508 aa).

A chloroplast-targeting transit peptide spans 1-60; that stretch reads MAASSSSSSSMASPRGRSIRETVLETVAAYHQQQRMRRKFRKSLSYAGELSSAGRARGEG. The interval 51–79 is disordered; it reads SSAGRARGEGGASSSASTTSLCGPDEDDE.

Belongs to the glycosyltransferase 28 family.

Its subcellular location is the plastid. It localises to the chloroplast membrane. It carries out the reaction a 1,2-diacyl-sn-glycerol + UDP-alpha-D-galactose = a 1,2-diacyl-3-O-(beta-D-galactosyl)-sn-glycerol + UDP + H(+). Its function is as follows. Involved in the synthesis of the major structural component of photosynthetic membranes. The sequence is that of Probable monogalactosyldiacylglycerol synthase 3, chloroplastic (MGD3) from Oryza sativa subsp. japonica (Rice).